A 734-amino-acid polypeptide reads, in one-letter code: Ribosomal biogenesis protein LAS1L (734 aa).

The interval 204–255 (EGIEEEDQEEDKNIVVDDITEQKPEPQDDGKSTESDVKADGDSKGSEEVDSH) is disordered. Residues 214–255 (DKNIVVDDITEQKPEPQDDGKSTESDVKADGDSKGSEEVDSH) are compositionally biased toward basic and acidic residues. Glycyl lysine isopeptide (Lys-Gly) (interchain with G-Cter in SUMO2) cross-links involve residues Lys-215 and Lys-226. A phosphoserine mark is found at Ser-441, Ser-523, and Ser-560. Residues 547–561 (GSEAKAQQQEEQGSV) are compositionally biased toward polar residues. The tract at residues 547–619 (GSEAKAQQQE…PFSTGQESPT (73 aa)) is disordered. Positions 563-575 (DVKEEEKEEKEVL) are enriched in basic and acidic residues. Residues 578–605 (QVEEEEENDDQEEEEEDEDDEDDEEEDR) show a composition bias toward acidic residues. Position 617 is a phosphoserine (Ser-617). The tract at residues 636–655 (SAWQVSSEDVRWDTFPLGRM) is interaction with NOL9.

Belongs to the LAS1 family. Component of some MLL1/MLL complex, at least composed of the core components KMT2A/MLL1, ASH2L, HCFC1/HCF1, WDR5 and RBBP5, as well as the facultative components BACC1, CHD8, E2F6, HSP70, INO80C, KANSL1, LAS1L, MAX, MCRS1, MGA, KAT8/MOF, PELP1, PHF20, PRP31, RING2, RUVB1/TIP49A, RUVB2/TIP49B, SENP3, TAF1, TAF4, TAF6, TAF7, TAF9 and TEX10. Component of the 5FMC complex, at least composed of PELP1, LAS1L, TEX10, WDR18 and SENP3; the complex interacts with methylated CHTOP and ZNF148. Interacts with NOL9 to form an ITS2 pre-rRNA endonuclease-kinase complex.

The protein localises to the nucleus. It is found in the nucleolus. Its subcellular location is the nucleoplasm. It localises to the cytoplasm. In terms of biological role, required for the synthesis of the 60S ribosomal subunit and maturation of the 28S rRNA. Functions as a component of the Five Friends of Methylated CHTOP (5FMC) complex; the 5FMC complex is recruited to ZNF148 by methylated CHTOP, leading to desumoylation of ZNF148 and subsequent transactivation of ZNF148 target genes. Required for the efficient pre-rRNA processing at both ends of internal transcribed spacer 2 (ITS2). This is Ribosomal biogenesis protein LAS1L (LAS1L) from Homo sapiens (Human).